We begin with the raw amino-acid sequence, 370 residues long: Flagellar P-ring protein (370 aa).

A signal peptide spans 1–21 (MRLFSVVLAVFTLLLPSQAFA).

It belongs to the FlgI family. As to quaternary structure, the basal body constitutes a major portion of the flagellar organelle and consists of four rings (L,P,S, and M) mounted on a central rod.

Its subcellular location is the periplasm. It localises to the bacterial flagellum basal body. Assembles around the rod to form the L-ring and probably protects the motor/basal body from shearing forces during rotation. In Alteromonas mediterranea (strain DSM 17117 / CIP 110805 / LMG 28347 / Deep ecotype), this protein is Flagellar P-ring protein.